We begin with the raw amino-acid sequence, 334 residues long: DGAT1/2-independent enzyme synthesizing storage lipids (334 aa).

Residues 1–50 (MTNKNQSFGVGQDSMSSMTCLIHVLEAWFGVEHLEDYWNFANYLLWVFTP) are Lumenal-facing. N-linked (GlcNAc...) asparagine glycosylation occurs at asparagine 5. The helical transmembrane segment at 51–71 (LLLLILPYFTIFLLYLTIIFL) threads the bilayer. Residues 72-125 (HIYKRKNVLKEAYSHNLWDGARKTVATLWDGHAAVWHGYEVHGMEKIPEEGPAL) lie on the Cytoplasmic side of the membrane. Residues 126 to 146 (IIFYHGAIPIDFYYFMAKIFI) traverse the membrane as a helical segment. Residue histidine 130 is part of the active site. Topologically, residues 147-334 (HKGRTCRVVA…NKQKINQKTL (188 aa)) are lumenal.

This sequence belongs to the diacylglycerol acyltransferase family. Highly divergent.

It localises to the endoplasmic reticulum membrane. The enzyme catalyses a 1,2-diacylglycerol + a 1,2-diacyl-sn-glycero-3-phosphocholine = a triacylglycerol + a 1-acyl-sn-glycero-3-phosphocholine. It carries out the reaction a 1-O-alkyl-2-acyl-sn-glycero-3-phosphocholine + a 1,2-diacylglycerol = a 1-O-alkyl-sn-glycero-3-phosphocholine + a triacylglycerol. The catalysed reaction is a 2-acylglycerol + an acyl-CoA = a 1,2-diacylglycerol + CoA. It catalyses the reaction an acyl-CoA + a 1,2-diacyl-sn-glycerol = a triacyl-sn-glycerol + CoA. The enzyme catalyses 2-(9Z-octadecenoyl)-glycerol + (9Z)-octadecenoyl-CoA = 1,2-di-(9Z-octadecenoyl)-glycerol + CoA. It carries out the reaction 1,2-di-(9Z-octadecenoyl)-sn-glycerol + (9Z)-octadecenoyl-CoA = 1,2,3-tri-(9Z-octadecenoyl)-glycerol + CoA. Its activity is regulated as follows. Acyltransferase activity is specifically inhibited by TMX1 at the endoplasmic reticulum, restricting accumulation of triacylglycerol. Catalytic subunit of the alternative triglyceride biosynthesis pathway, which mediates formation of triacylglycerol from diacylglycerol and membrane phospholipids. Synthesizes triacylglycerol at the expense of membrane phospholipids, such as phosphatidylcholine (PC) and its ether-linked form (ePC), thereby altering the composition of membranes. The alternative triglyceride biosynthesis pathway is probably required to provide the energy required for rapid growth when fuel sources are limiting. It maintains mitochondrial function during periods of extracellular lipid starvation. Can also use acyl-CoA as donor: acts as a acyl-CoA:monoacylglycerol acyltransferase (MGAT), but also shows acyl-CoA:diacylglycerol acyltransferase (DGAT) activity. In Bos taurus (Bovine), this protein is DGAT1/2-independent enzyme synthesizing storage lipids (TMEM68).